The primary structure comprises 318 residues: MPIAMGLETACELECAALGALLREPREAERTLLLDCRPFLAFCRSHVRAARPVPWNALLRRRARGTPAAALACLLPDRALRARLGRGELARAVVLDESSASVAELPPDGPAHLLLAALQHEMRGGPTTVCFLRGGFKSFQTYCPDLCSEAPAQALPPAGAENSNSDPRVPIYDQGGPVEILPYLYLGSCNHSSDLQGLQACGITAVLNVSASCPNHFEGLFHYKSIPVEDNQMVEISAWFQEAISFIDSVKNSGGRVLVHCQAGISRSATICLAYLIQSHRVRLDEAFDFVKQRRGVISPNFSFMGQLLQLETQVLCH.

The region spanning 27–148 (EAERTLLLDC…FQTYCPDLCS (122 aa)) is the Rhodanese domain. The Tyrosine-protein phosphatase domain occupies 176-317 (GPVEILPYLY…LLQLETQVLC (142 aa)). The active-site Phosphocysteine intermediate is the C261.

Belongs to the protein-tyrosine phosphatase family. Non-receptor class dual specificity subfamily. Interacts with MAPK14; this interaction does not lead to catalytic activation of DUSP2 and dephosphrylation of MAPK14. In hematopoietic tissues such as spleen and thymus.

It localises to the nucleus. The enzyme catalyses O-phospho-L-tyrosyl-[protein] + H2O = L-tyrosyl-[protein] + phosphate. The catalysed reaction is O-phospho-L-threonyl-[protein] + H2O = L-threonyl-[protein] + phosphate. In terms of biological role, dephosphorylates both phosphorylated Thr and Tyr residues in MAPK1, and dephosphorylation of phosphotyrosine is slightly faster than that of phosphothreonine. Can dephosphorylate MAPK1. The chain is Dual specificity protein phosphatase 2 from Mus musculus (Mouse).